The primary structure comprises 261 residues: MWIPLLLVALVVPAIRCERKCGECNPEKCQPPSEECLAGLVKDLCGCCYVCGRREGELCDGDFLPIPYRNRGHGPCGEYLECRPRTDLAPGDPPEAMCVCLKTETLCGSDGKTYQNECQLTEARYKQRDGLRAMHRGPCKSAPKITSPPEEASNYTGGNIAMSCEATGWPIPVFEWRVDIGDGNTIPLPSDDPKVSVQSRGGPSKYEVTSWLQLLSIQPKDDATYWCIAKNDEGESSAAARVVVLDFRGSQTSQKGRDNDL.

An N-terminal signal peptide occupies residues 1-17; it reads MWIPLLLVALVVPAIRC. One can recognise an IGFBP N-terminal domain in the interval 18-101; it reads ERKCGECNPE…DPPEAMCVCL (84 aa). 8 disulfides stabilise this stretch: cysteine 21–cysteine 45, cysteine 24–cysteine 47, cysteine 29–cysteine 48, cysteine 36–cysteine 51, cysteine 59–cysteine 82, cysteine 76–cysteine 98, cysteine 100–cysteine 118, and cysteine 107–cysteine 139. Positions 70–141 constitute a Kazal-like domain; it reads NRGHGPCGEY…RAMHRGPCKS (72 aa). The region spanning 143-243 is the Ig-like C2-type domain; sequence PKITSPPEEA…GESSAAARVV (101 aa). Asparagine 154 is a glycosylation site (N-linked (GlcNAc...) asparagine). An intrachain disulfide couples cysteine 164 to cysteine 227.

As to expression, expressed by the venom gland.

Its subcellular location is the secreted. This Cupiennius salei (American wandering spider) protein is Insulin-like growth factor-binding protein-related protein 1.